Consider the following 427-residue polypeptide: 3-phosphoshikimate 1-carboxyvinyltransferase (427 aa).

3-phosphoshikimate-binding residues include K22, S23, and R27. K22 provides a ligand contact to phosphoenolpyruvate. G96 and R124 together coordinate phosphoenolpyruvate. Positions 170, 171, 172, 198, 314, 337, and 341 each coordinate 3-phosphoshikimate. Residue Q172 coordinates phosphoenolpyruvate. The Proton acceptor role is filled by D314. R345, R387, and K412 together coordinate phosphoenolpyruvate.

Belongs to the EPSP synthase family. As to quaternary structure, monomer.

The protein resides in the cytoplasm. It catalyses the reaction 3-phosphoshikimate + phosphoenolpyruvate = 5-O-(1-carboxyvinyl)-3-phosphoshikimate + phosphate. Its pathway is metabolic intermediate biosynthesis; chorismate biosynthesis; chorismate from D-erythrose 4-phosphate and phosphoenolpyruvate: step 6/7. Catalyzes the transfer of the enolpyruvyl moiety of phosphoenolpyruvate (PEP) to the 5-hydroxyl of shikimate-3-phosphate (S3P) to produce enolpyruvyl shikimate-3-phosphate and inorganic phosphate. This Tolumonas auensis (strain DSM 9187 / NBRC 110442 / TA 4) protein is 3-phosphoshikimate 1-carboxyvinyltransferase.